The chain runs to 314 residues: Glycine--tRNA ligase alpha subunit (314 aa).

It belongs to the class-II aminoacyl-tRNA synthetase family. Tetramer of two alpha and two beta subunits.

The protein localises to the cytoplasm. The enzyme catalyses tRNA(Gly) + glycine + ATP = glycyl-tRNA(Gly) + AMP + diphosphate. This chain is Glycine--tRNA ligase alpha subunit, found in Mesorhizobium japonicum (strain LMG 29417 / CECT 9101 / MAFF 303099) (Mesorhizobium loti (strain MAFF 303099)).